A 480-amino-acid chain; its full sequence is MASEKVETIVAGNYVEMEREGAATAGEGVGGAAAASGRRRGKLAVSSLFWHGGSVYDAWFSCASNQVAQVLLTLPYSFSQLGMASGVAFQVFYGLMGSWTAYLISVLYVEYRTRRERDKVDFRNHVIQWFEVLDGLLGRHWRNAGLLFNCTFLLFGSVIQLIACASNIYYINDRLDKRTWTYIFGACCATTVFVPSFHNYRVWSFLGLLMTSYTAWYLTVAAVVHGKVDGAAPRAGPSKTMVLYFTGATNILYTFGGHAVTVEIMHAMWRPRRFKMIYLAATAYVLTLTLPSAAAMYWAFGDALLDHSNAFALLPRTPWRDAAVVLMLIHQFITFGFACTPLYFVWEKAIGVHGGAGVLRRAAARLPVVLPIWFLAVIFPFFGPINSTVGSFLVSFTVYIIPAMAHMATFAPAAARENAVEPPPRALGGWPGTFAANCFVVAWVLVVGFGFGGWASTVNFVRQVDTFGLFTKCYQCPPRH.

The Cytoplasmic portion of the chain corresponds to 1-66 (MASEKVETIV…DAWFSCASNQ (66 aa)). The helical transmembrane segment at 67–84 (VAQVLLTLPYSFSQLGMA) threads the bilayer. The Extracellular portion of the chain corresponds to 85–86 (SG). Residues 87–107 (VAFQVFYGLMGSWTAYLISVL) traverse the membrane as a helical segment. Residues 108 to 143 (YVEYRTRRERDKVDFRNHVIQWFEVLDGLLGRHWRN) lie on the Cytoplasmic side of the membrane. Residues 144–164 (AGLLFNCTFLLFGSVIQLIAC) form a helical membrane-spanning segment. Residues 165-179 (ASNIYYINDRLDKRT) are Extracellular-facing. Residues 180–200 (WTYIFGACCATTVFVPSFHNY) traverse the membrane as a helical segment. Residues 201–203 (RVW) lie on the Cytoplasmic side of the membrane. The helical transmembrane segment at 204 to 224 (SFLGLLMTSYTAWYLTVAAVV) threads the bilayer. At 225–241 (HGKVDGAAPRAGPSKTM) the chain is on the extracellular side. Residues 242–262 (VLYFTGATNILYTFGGHAVTV) form a helical membrane-spanning segment. The Cytoplasmic segment spans residues 263-275 (EIMHAMWRPRRFK). A helical transmembrane segment spans residues 276–296 (MIYLAATAYVLTLTLPSAAAM). Residues 297 to 323 (YWAFGDALLDHSNAFALLPRTPWRDAA) are Extracellular-facing. A helical membrane pass occupies residues 324 to 344 (VVLMLIHQFITFGFACTPLYF). At 345-365 (VWEKAIGVHGGAGVLRRAAAR) the chain is on the cytoplasmic side. Residues 366 to 386 (LPVVLPIWFLAVIFPFFGPIN) form a helical membrane-spanning segment. Residue serine 387 is a topological domain, extracellular. A helical membrane pass occupies residues 388–408 (TVGSFLVSFTVYIIPAMAHMA). At 409–433 (TFAPAAARENAVEPPPRALGGWPGT) the chain is on the cytoplasmic side. Residues 434–454 (FAANCFVVAWVLVVGFGFGGW) traverse the membrane as a helical segment. Topologically, residues 455–480 (ASTVNFVRQVDTFGLFTKCYQCPPRH) are extracellular.

The protein belongs to the amino acid/polyamine transporter 2 family. Amino acid/auxin permease (AAAP) (TC 2.A.18.1) subfamily.

Its subcellular location is the cell membrane. Functionally, carrier protein involved in proton-driven auxin influx. May mediate the formation of auxin gradient from developing leaves (site of auxin biosynthesis) to tips. In Oryza sativa subsp. japonica (Rice), this protein is Putative auxin transporter-like protein 4.